Here is a 229-residue protein sequence, read N- to C-terminus: NADH dehydrogenase [ubiquinone] iron-sulfur protein 8, mitochondrial (229 aa).

A mitochondrion-targeting transit peptide spans 1-41 (MAAILARKSLSALRSRQLVLAGHTIEGTNGYNRTLLGTRSF). 4Fe-4S ferredoxin-type domains are found at residues 121–150 (RRYA…IEAE) and 160–189 (TRYD…EGPN). [4Fe-4S] cluster is bound by residues Cys-130, Cys-133, Cys-136, Cys-140, Cys-169, Cys-172, Cys-175, and Cys-179.

Belongs to the complex I 23 kDa subunit family. In terms of assembly, complex I is composed of about 45 different subunits. This is a component of the iron-sulfur (IP) fragment of the enzyme. The cofactor is [4Fe-4S] cluster. Lowest expression found in storage tissues of tubers. Higher expression in older leaves than younger ones. Highest expression found in flowers.

The protein localises to the mitochondrion inner membrane. It carries out the reaction a ubiquinone + NADH + 5 H(+)(in) = a ubiquinol + NAD(+) + 4 H(+)(out). Its function is as follows. Core subunit of the mitochondrial membrane respiratory chain NADH dehydrogenase (Complex I) that is believed to belong to the minimal assembly required for catalysis. Complex I functions in the transfer of electrons from NADH to the respiratory chain. The immediate electron acceptor for the enzyme is believed to be ubiquinone. May donate electrons to ubiquinone. The polypeptide is NADH dehydrogenase [ubiquinone] iron-sulfur protein 8, mitochondrial (Solanum tuberosum (Potato)).